Consider the following 768-residue polypeptide: Gephyrin (768 aa).

The tract at residues glutamine 14–glutamate 166 is MPT Mo-transferase. Residues leucine 153–histidine 348 form an interaction with GABARAP region. Disordered regions lie at residues aspartate 194–serine 245 and threonine 273–valine 316. Positions proline 200 to threonine 212 are enriched in pro residues. Serine 201 and serine 207 each carry phosphoserine. Position 211 is a phosphothreonine (threonine 211). Serine 213 is modified (phosphoserine). Residue cysteine 225 is the site of S-palmitoyl cysteine attachment. The segment covering alanine 274–threonine 299 has biased composition (polar residues). At serine 275 the chain carries Phosphoserine. Residues threonine 278 and threonine 279 each carry the phosphothreonine modification. 2 positions are modified to phosphoserine: serine 281 and serine 283. A lipid anchor (S-palmitoyl cysteine) is attached at cysteine 297. Residues serine 326–leucine 768 are MPT adenylyltransferase. Residue serine 337 is modified to Phosphoserine.

The protein in the N-terminal section; belongs to the MoaB/Mog family. This sequence in the C-terminal section; belongs to the MoeA family. In terms of assembly, homotrimer, homodimer and homooligomer. Interacts with SRGAP2 (via SH3 domain). Interacts with GLRB. Interacts with GABARAP. Interacts with GABRA3. GABRA3 and GLRB occupy overlapping binding sites. Interacts with ARHGAP32; IQSEC3, INSYN1 and INSYN2A. Requires Mg(2+) as cofactor. Post-translationally, phosphorylated. Palmitoylated. Palmitoylation is stimulated by GABA type A receptors activity. Palmitoylation by ZDHHC12 regulates clustering at synapses. Expressed in tissues including spinal cord, brain, liver, kidney and lung.

The protein resides in the postsynaptic cell membrane. The protein localises to the cell membrane. It is found in the cytoplasm. Its subcellular location is the cytosol. It localises to the cytoskeleton. The protein resides in the cell projection. The protein localises to the dendrite. It is found in the postsynaptic density. It carries out the reaction molybdopterin + ATP + H(+) = adenylyl-molybdopterin + diphosphate. The catalysed reaction is adenylyl-molybdopterin + molybdate = Mo-molybdopterin + AMP + H(+). It functions in the pathway cofactor biosynthesis; molybdopterin biosynthesis. Inhibited by copper and tungsten. Its function is as follows. Microtubule-associated protein involved in membrane protein-cytoskeleton interactions. It is thought to anchor the inhibitory glycine receptor (GLYR) to subsynaptic microtubules. Acts as a major instructive molecule at inhibitory synapses, where it also clusters GABA type A receptors. Functionally, also has a catalytic activity and catalyzes two steps in the biosynthesis of the molybdenum cofactor. In the first step, molybdopterin is adenylated. Subsequently, molybdate is inserted into adenylated molybdopterin and AMP is released. In Rattus norvegicus (Rat), this protein is Gephyrin (Gphn).